We begin with the raw amino-acid sequence, 444 residues long: Cell wall mannoprotein PST1 (444 aa).

The first 19 residues, 1-19 (MQLHSLIASTALLITSALA), serve as a signal peptide directing secretion. N57, N76, N83, N86, N196, N210, N228, N235, N242, N263, N268, N280, N292, N305, and N329 each carry an N-linked (GlcNAc...) asparagine glycan. 2 stretches are compositionally biased toward low complexity: residues 359–381 (SVKL…SKSS) and 395–417 (KAAA…KSSK). The interval 359–418 (SVKLSSTSKSQSSQTTAKVSKSSSKAEEKKFTSGDIKAAASASSVSSSSASSSSSKSSKG) is disordered. Residue N419 is the site of GPI-anchor amidated asparagine attachment. A propeptide spans 420 to 444 (AAIMAPIGQTTPLVGLLTAIIMSIM) (removed in mature form).

It belongs to the SPS2 family. Post-translationally, extensively N- and O-mannosylated.

Its subcellular location is the cell membrane. It is found in the secreted. The protein localises to the cell wall. Functionally, has a partially redundant function to ECM33 in cell wall integrity. May be involved in a repair mechanism activated in response to cell wall damage. The polypeptide is Cell wall mannoprotein PST1 (PST1) (Saccharomyces cerevisiae (strain YJM789) (Baker's yeast)).